Reading from the N-terminus, the 108-residue chain is MYAVFISGGKQYRVVKNQIIRLEKLNSPLGTTIEFDKILMLFDKDSIKIGTPFVEGGTIKAHIQNHGRLKKIKIIKFNRRKHYKKQQGHRQYFTDVKIIDINSIKGEV.

Belongs to the bacterial ribosomal protein bL21 family. In terms of assembly, part of the 50S ribosomal subunit. Contacts protein L20.

Functionally, this protein binds to 23S rRNA in the presence of protein L20. The sequence is that of Large ribosomal subunit protein bL21 from Buchnera aphidicola subsp. Acyrthosiphon pisum (strain 5A).